The chain runs to 339 residues: Scoulerine-9-O-methyltransferase 3 (339 aa).

Methionine 161 is a binding site for S-adenosyl-L-methionine. Position 164 (aspartate 164) interacts with substrate. S-adenosyl-L-methionine contacts are provided by residues threonine 165, glycine 191, aspartate 214, 228-229, and lysine 242; that span reads DV. 243–247 is a binding site for substrate; it reads SILHE. Histidine 246 (proton acceptor) is an active-site residue.

It belongs to the class I-like SAM-binding methyltransferase superfamily. Cation-independent O-methyltransferase family. COMT subfamily. In terms of assembly, homodimer. Forms heterodimer with SOMT2. The heterodimer SOMT2-SOMT3 possesses 3-O-acetyl-4'-O-demethylpapaveroxine 4'-O-methyltransferase activity, where SOMT2 is the catalytic subunit. In terms of tissue distribution, highly expressed in capsules. Expressed is stems. Expressed at low levels in roots.

It catalyses the reaction (S)-scoulerine + S-adenosyl-L-methionine = (S)-tetrahydrocolumbamine + S-adenosyl-L-homocysteine + H(+). Its pathway is alkaloid biosynthesis. Its function is as follows. Methyltransferase involved in the biosynthesis of the benzylisoquinoline alkaloid noscapine. Catalyzes the conversion of (S)-scoulerine to (S)-tetrahydrocolumbamine. The chain is Scoulerine-9-O-methyltransferase 3 from Papaver somniferum (Opium poppy).